Consider the following 493-residue polypeptide: tRNA (uracil-5-)-methyltransferase homolog B (493 aa).

A mitochondrion-targeting transit peptide spans 1–14 (MHNPRLFLSRAGFF). S-adenosyl-L-methionine-binding residues include Q312, E362, and N412. The active-site Nucleophile is the C440. The active-site Proton acceptor is E486.

It belongs to the class I-like SAM-binding methyltransferase superfamily. RNA M5U methyltransferase family.

It localises to the mitochondrion matrix. The enzyme catalyses uridine(54) in tRNA + S-adenosyl-L-methionine = 5-methyluridine(54) in tRNA + S-adenosyl-L-homocysteine + H(+). It carries out the reaction a uridine in 12S rRNA + S-adenosyl-L-methionine = a 5-methyluridine in 12S rRNA + S-adenosyl-L-homocysteine + H(+). Its function is as follows. Mitochondrial S-adenosyl-L-methionine-dependent methyltransferase that catalyzes the formation of 5-methyl-uridine in tRNAs and 12S rRNA. Catalyzes the methylation of uridine at position 54 (m5U54) in all tRNAs. Specifically methylates the uridine in position 425 of 12S rRNA (m5U425). Does not affect RNA stability or mitochondrial translation. This is tRNA (uracil-5-)-methyltransferase homolog B from Mus musculus (Mouse).